The chain runs to 607 residues: Chaperone protein DnaK (607 aa).

At Thr174 the chain carries Phosphothreonine; by autocatalysis. The tract at residues 577–607 (GYTASGPQGGPNPGGGQSGPDGNVNTDYKVY) is disordered. A compositionally biased stretch (gly residues) spans 583-595 (PQGGPNPGGGQSG).

The protein belongs to the heat shock protein 70 family.

Acts as a chaperone. The protein is Chaperone protein DnaK of Caldicellulosiruptor bescii (strain ATCC BAA-1888 / DSM 6725 / KCTC 15123 / Z-1320) (Anaerocellum thermophilum).